Here is a 382-residue protein sequence, read N- to C-terminus: Threonine synthase (382 aa).

Residue lysine 93 is modified to N6-(pyridoxal phosphate)lysine. Residues asparagine 119, 219 to 223 (GNAGN), and threonine 347 contribute to the pyridoxal 5'-phosphate site.

It belongs to the threonine synthase family. Pyridoxal 5'-phosphate serves as cofactor.

It carries out the reaction O-phospho-L-homoserine + H2O = L-threonine + phosphate. It functions in the pathway amino-acid biosynthesis; L-threonine biosynthesis; L-threonine from L-aspartate: step 5/5. Catalyzes the gamma-elimination of phosphate from L-phosphohomoserine and the beta-addition of water to produce L-threonine. The sequence is that of Threonine synthase (thrC) from Synechocystis sp. (strain ATCC 27184 / PCC 6803 / Kazusa).